The sequence spans 299 residues: Putative glycylpeptide N-tetradecanoyltransferase (299 aa).

It belongs to the NMT family.

The catalysed reaction is N-terminal glycyl-[protein] + tetradecanoyl-CoA = N-tetradecanoylglycyl-[protein] + CoA + H(+). Functionally, adds a myristoyl group to the N-terminal glycine residue of certain proteins. The sequence is that of Putative glycylpeptide N-tetradecanoyltransferase from Amsacta moorei entomopoxvirus (AmEPV).